The chain runs to 556 residues: 2-succinyl-5-enolpyruvyl-6-hydroxy-3-cyclohexene-1-carboxylate synthase (556 aa).

This sequence belongs to the TPP enzyme family. MenD subfamily. As to quaternary structure, homodimer. Mg(2+) is required as a cofactor. It depends on Mn(2+) as a cofactor. Requires thiamine diphosphate as cofactor.

It catalyses the reaction isochorismate + 2-oxoglutarate + H(+) = 5-enolpyruvoyl-6-hydroxy-2-succinyl-cyclohex-3-ene-1-carboxylate + CO2. It functions in the pathway quinol/quinone metabolism; 1,4-dihydroxy-2-naphthoate biosynthesis; 1,4-dihydroxy-2-naphthoate from chorismate: step 2/7. It participates in quinol/quinone metabolism; menaquinone biosynthesis. In terms of biological role, catalyzes the thiamine diphosphate-dependent decarboxylation of 2-oxoglutarate and the subsequent addition of the resulting succinic semialdehyde-thiamine pyrophosphate anion to isochorismate to yield 2-succinyl-5-enolpyruvyl-6-hydroxy-3-cyclohexene-1-carboxylate (SEPHCHC). In Escherichia coli (strain 55989 / EAEC), this protein is 2-succinyl-5-enolpyruvyl-6-hydroxy-3-cyclohexene-1-carboxylate synthase.